We begin with the raw amino-acid sequence, 227 residues long: ATP-dependent dethiobiotin synthetase BioD (227 aa).

Residue 13 to 18 participates in ATP binding; the sequence is DIGKTY. Mg(2+) is bound at residue T17. K38 is a catalytic residue. S42 serves as a coordination point for substrate. ATP is bound by residues D55, 116–119, and 179–180; these read EGSG and NN. The Mg(2+) site is built by D55 and E116.

This sequence belongs to the dethiobiotin synthetase family. In terms of assembly, homodimer. It depends on Mg(2+) as a cofactor.

It is found in the cytoplasm. It carries out the reaction (7R,8S)-7,8-diammoniononanoate + CO2 + ATP = (4R,5S)-dethiobiotin + ADP + phosphate + 3 H(+). The protein operates within cofactor biosynthesis; biotin biosynthesis; biotin from 7,8-diaminononanoate: step 1/2. Catalyzes a mechanistically unusual reaction, the ATP-dependent insertion of CO2 between the N7 and N8 nitrogen atoms of 7,8-diaminopelargonic acid (DAPA, also called 7,8-diammoniononanoate) to form a ureido ring. The protein is ATP-dependent dethiobiotin synthetase BioD of Clostridium botulinum (strain Loch Maree / Type A3).